The chain runs to 325 residues: Tetraacyldisaccharide 4'-kinase (325 aa).

55 to 62 (TAGGNGKT) lines the ATP pocket.

Belongs to the LpxK family.

It catalyses the reaction a lipid A disaccharide + ATP = a lipid IVA + ADP + H(+). The protein operates within glycolipid biosynthesis; lipid IV(A) biosynthesis; lipid IV(A) from (3R)-3-hydroxytetradecanoyl-[acyl-carrier-protein] and UDP-N-acetyl-alpha-D-glucosamine: step 6/6. Functionally, transfers the gamma-phosphate of ATP to the 4'-position of a tetraacyldisaccharide 1-phosphate intermediate (termed DS-1-P) to form tetraacyldisaccharide 1,4'-bis-phosphate (lipid IVA). The polypeptide is Tetraacyldisaccharide 4'-kinase (Salmonella arizonae (strain ATCC BAA-731 / CDC346-86 / RSK2980)).